Consider the following 556-residue polypeptide: Protein trichome birefringence-like 1 (556 aa).

Residues 38-58 (TFVYAFVVTFVALTVFLAFSP) form a helical; Signal-anchor for type II membrane protein membrane-spanning segment. Positions 269-271 (GDS) match the GDS motif motif. The DCXHWCLPGXXDXWN motif signature appears at 514–528 (DCSHWCLPGVPDSWN).

This sequence belongs to the PC-esterase family. TBL subfamily. As to expression, not expressed in trichomes.

Its subcellular location is the membrane. Functionally, can complement TBR and is therefore functionally equivalent, but may work in different tissue. May act as a bridging protein that binds pectin and other cell wall polysaccharides. Probably involved in maintaining esterification of pectins. May be involved in the specific O-acetylation of cell wall polymers. This is Protein trichome birefringence-like 1 (TBL1) from Arabidopsis thaliana (Mouse-ear cress).